We begin with the raw amino-acid sequence, 319 residues long: Acetyl-coenzyme A carboxylase carboxyl transferase subunit alpha (319 aa).

The CoA carboxyltransferase C-terminal domain maps to 32–293 (NVDAEVRALR…KAVLLNELDA (262 aa)).

It belongs to the AccA family. Acetyl-CoA carboxylase is a heterohexamer composed of biotin carboxyl carrier protein (AccB), biotin carboxylase (AccC) and two subunits each of ACCase subunit alpha (AccA) and ACCase subunit beta (AccD).

The protein resides in the cytoplasm. It carries out the reaction N(6)-carboxybiotinyl-L-lysyl-[protein] + acetyl-CoA = N(6)-biotinyl-L-lysyl-[protein] + malonyl-CoA. It functions in the pathway lipid metabolism; malonyl-CoA biosynthesis; malonyl-CoA from acetyl-CoA: step 1/1. Its function is as follows. Component of the acetyl coenzyme A carboxylase (ACC) complex. First, biotin carboxylase catalyzes the carboxylation of biotin on its carrier protein (BCCP) and then the CO(2) group is transferred by the carboxyltransferase to acetyl-CoA to form malonyl-CoA. The polypeptide is Acetyl-coenzyme A carboxylase carboxyl transferase subunit alpha (Xanthomonas campestris pv. campestris (strain B100)).